The primary structure comprises 159 residues: Nucleotide-binding protein PLES_47741 (159 aa).

This sequence belongs to the YajQ family.

Nucleotide-binding protein. This Pseudomonas aeruginosa (strain LESB58) protein is Nucleotide-binding protein PLES_47741.